We begin with the raw amino-acid sequence, 767 residues long: Photosystem I P700 chlorophyll a apoprotein A1 (767 aa).

8 helical membrane-spanning segments follow: residues 72–95 (IFSA…FHGA), 158–181 (LMSL…FHYH), 197–221 (LNHH…HVSL), 305–323 (IAHH…GHMY), 364–387 (WHAQ…QHMY), 403–429 (IGLF…IAMI), 451–473 (ALIS…LYIH), and 548–566 (FMVH…LILL). Residues cysteine 590 and cysteine 599 each coordinate [4Fe-4S] cluster. Transmembrane regions (helical) follow at residues 606 to 627 (HVFL…HFSW) and 681 to 703 (TSAY…MFLF). Residue histidine 692 coordinates chlorophyll a'. Methionine 700 and tyrosine 708 together coordinate chlorophyll a. Tryptophan 709 serves as a coordination point for phylloquinone. Residues 741–761 (AVGVAHYLLGGIATTWAFFHA) form a helical membrane-spanning segment.

This sequence belongs to the PsaA/PsaB family. As to quaternary structure, the PsaA/B heterodimer binds the P700 chlorophyll special pair and subsequent electron acceptors. PSI consists of a core antenna complex that captures photons, and an electron transfer chain that converts photonic excitation into a charge separation. The cyanobacterial PSI reaction center is composed of one copy each of PsaA,B,C,D,E,F,I,J,K,L,M and X, and forms trimeric complexes. PSI electron transfer chain: 5 chlorophyll a, 1 chlorophyll a', 2 phylloquinones and 3 4Fe-4S clusters. PSI core antenna: 90 chlorophyll a, 22 carotenoids, 3 phospholipids and 1 galactolipid. P700 is a chlorophyll a/chlorophyll a' dimer, A0 is one or more chlorophyll a, A1 is one or both phylloquinones and FX is a shared 4Fe-4S iron-sulfur center. serves as cofactor.

The protein resides in the cellular thylakoid membrane. The catalysed reaction is reduced [plastocyanin] + hnu + oxidized [2Fe-2S]-[ferredoxin] = oxidized [plastocyanin] + reduced [2Fe-2S]-[ferredoxin]. Its function is as follows. PsaA and PsaB bind P700, the primary electron donor of photosystem I (PSI), as well as the electron acceptors A0, A1 and FX. PSI is a plastocyanin/cytochrome c6-ferredoxin oxidoreductase, converting photonic excitation into a charge separation, which transfers an electron from the donor P700 chlorophyll pair to the spectroscopically characterized acceptors A0, A1, FX, FA and FB in turn. Oxidized P700 is reduced on the lumenal side of the thylakoid membrane by plastocyanin or cytochrome c6. The chain is Photosystem I P700 chlorophyll a apoprotein A1 from Synechococcus sp. (strain WH7803).